The chain runs to 345 residues: Protein RecA (345 aa).

An ATP-binding site is contributed by 68–75 (GVESSGKT).

This sequence belongs to the RecA family.

The protein localises to the cytoplasm. Its function is as follows. Can catalyze the hydrolysis of ATP in the presence of single-stranded DNA, the ATP-dependent uptake of single-stranded DNA by duplex DNA, and the ATP-dependent hybridization of homologous single-stranded DNAs. It interacts with LexA causing its activation and leading to its autocatalytic cleavage. In Aquifex aeolicus (strain VF5), this protein is Protein RecA.